Here is a 431-residue protein sequence, read N- to C-terminus: Tyrosine--tRNA ligase (431 aa).

Y34 lines the L-tyrosine pocket. The short motif at 39-48 is the 'HIGH' region element; the sequence is PTADSLHIGH. The L-tyrosine site is built by Y171 and Q175. Residues 231–235 carry the 'KMSKS' region motif; it reads KFGKT. ATP is bound at residue K234. The 70-residue stretch at 353-422 folds into the S4 RNA-binding domain; that stretch reads INVVEALVKT…GKYTILRRGK (70 aa).

The protein belongs to the class-I aminoacyl-tRNA synthetase family. TyrS type 1 subfamily. As to quaternary structure, homodimer.

It is found in the cytoplasm. The catalysed reaction is tRNA(Tyr) + L-tyrosine + ATP = L-tyrosyl-tRNA(Tyr) + AMP + diphosphate + H(+). Functionally, catalyzes the attachment of tyrosine to tRNA(Tyr) in a two-step reaction: tyrosine is first activated by ATP to form Tyr-AMP and then transferred to the acceptor end of tRNA(Tyr). The polypeptide is Tyrosine--tRNA ligase (Neisseria meningitidis serogroup A / serotype 4A (strain DSM 15465 / Z2491)).